The sequence spans 610 residues: UvrABC system protein C (610 aa).

Residues 16–94 form the GIY-YIG domain; that stretch reads SQPGVYRMYD…IKLYQPRYNV (79 aa). The region spanning 204 to 239 is the UVR domain; that stretch reads DQVLTQLISRMETASQNLEFEEAARIRDQIQAVRRV.

The protein belongs to the UvrC family. In terms of assembly, interacts with UvrB in an incision complex.

Its subcellular location is the cytoplasm. Functionally, the UvrABC repair system catalyzes the recognition and processing of DNA lesions. UvrC both incises the 5' and 3' sides of the lesion. The N-terminal half is responsible for the 3' incision and the C-terminal half is responsible for the 5' incision. The polypeptide is UvrABC system protein C (Escherichia coli (strain ATCC 8739 / DSM 1576 / NBRC 3972 / NCIMB 8545 / WDCM 00012 / Crooks)).